The chain runs to 1365 residues: Zinc finger protein 423 (1365 aa).

Over residues 1-11 (MSRRKQAKPRS) the composition is skewed to basic residues. Residues 1–69 (MSRRKQAKPR…SHDERVGEED (69 aa)) form a disordered region. Residues 37–51 (VSERDSDRKESRAVG) show a composition bias toward basic and acidic residues. Residues 76–98 (FTCDNCQQDFECLADLTEHRTNH) form a C2H2-type 1 zinc finger. Residues 99-126 (CPADGDDDPGLSWVASSPSSKDVASPSQ) are disordered. A compositionally biased stretch (low complexity) spans 112-126 (VASSPSSKDVASPSQ). 4 consecutive C2H2-type zinc fingers follow at residues 150-172 (YPCQFCDKSFSRLSYLKRHEQIH), 178-200 (FKCTFCSRLFKHKRSRDRHVKLH), 206-228 (YSCQECEAAFSRSDHLKIHLKTH), and 234-256 (FKCSICKRGFSSTSSLQSHMQAH). The disordered stretch occupies residues 250–280 (QSHMQAHRKNKEHLAKKDQGKRDGSSSDVTE). Basic and acidic residues predominate over residues 261-274 (EHLAKKDQGKRDGS). 3 consecutive C2H2-type zinc fingers follow at residues 286–309 (YMCDYCEETFSQTDELEKHVLTQH), 318–341 (LQCIHCPEIFSDEGTLLTHIDRTH), and 346–368 (HKCPMCAEQFPSVEDVYCHLDSH). Residues 366–429 (DSHRQPDSSN…LAPSSDHDDG (64 aa)) form a disordered region. The segment covering 386–400 (SVASMSSATPDSSAS) has biased composition (low complexity). The C2H2-type 9; degenerate zinc finger occupies 437-461 (YSCPYCSKRDFNSLAVLEIHLKTIH). C2H2-type zinc fingers lie at residues 469-492 (HTCQLCLETLPTLYNLNEHVRKAH), 513-536 (FHCNYCPDMFADINSLQEHIRVSH), and 555-578 (FFCNQCSMGFLTESSLTEHIQQTH). The C2H2-type 13; atypical zinc finger occupies 603 to 628 (YSCPYCTNSPIFGSLLKLTKHIKENH). 7 C2H2-type zinc fingers span residues 675 to 697 (YPCNQCDLRFSSFEGFQAHLKSH), 705 to 728 (QSCPQCNKEDFDSQEALLQHLTIH), 736 to 759 (YVCESCDKQFSSVDDLQKHLLDMH), 764 to 787 (YHCTLCQEVFDSKVSIQVHLAVKH), 794 to 817 (YRCTACAWDFRKESDLQLHVKHSH), 831 to 853 (RKCIFCGETFGTEVELQCHITTH), and 857 to 880 (YNCRLCGKAFHAIVLLERHLREKH). A compositionally biased stretch (gly residues) spans 885-895 (GGNGNGNGGSQ). Positions 885 to 916 (GGNGNGNGGSQNGTPNGVTQSSKRSTAGSTAA) are disordered. Over residues 902–913 (VTQSSKRSTAGS) the composition is skewed to polar residues. The C2H2-type 21; degenerate zinc finger occupies 954-976 (YACDICGAAYTMESLLQNHRLRD). C2H2-type zinc fingers lie at residues 1000–1022 (HKCNVCSRTFFSENGLREHAQTH), 1029–1051 (YMCPICGERFPSLLTLTEHKVTH), 1090–1112 (FRCVVCMQTVTSTLELKIHGTFH), 1201–1224 (LRCSECAVKFETLEDLESHIQVDH), 1249–1271 (YQCIKCQMTFETEREIQIHVANH), 1279–1301 (HECKLCNQMFDSPAKLLCHLIEH), 1310–1333 (FKCPVCFTVFVQANKLQQHIFAVH), and 1340–1363 (YDCSQCPQKFFFQTELQNHTLSQH).

Belongs to the krueppel C2H2-type zinc-finger protein family.

It is found in the nucleus. Its function is as follows. Transcription factor that can both act as an activator or a repressor depending on the context. Plays a central role in BMP signaling and olfactory neurogenesis. Associates with SMADs in response to bmp2 leading to activate transcription of BMP target genes. Acts as a transcriptional repressor involved in terminal olfactory receptor neurons differentiation. Involved in olfactory neurogenesis by participating in a developmental switch that regulates the transition from differentiation to maturation in olfactory receptor neurons. The chain is Zinc finger protein 423 (znf423) from Danio rerio (Zebrafish).